Consider the following 509-residue polypeptide: MTDATTTDVLVLGSGIAGCGAALAAAREGASVLVATKAQQPADASTDWAQGGIATTRDDPESLKRDILAAGDGEADPEAVDALVGDAAAAVEDVLVDTLGVPFDGEEGFDYAREAAHSAARILHVDAATGHHILGPFLRHLDAHENVDMLEDAAALDLITDEGAVTGALLDRNPRTGDRAETGVPVFAGSTVLATGGIGDLYRRSTNPRGSTGDGVAMAALAGADVTDAEYVQFHPTAYDDADPFLVSEAVRGEGALLRNADGERFMPDYHEDAELAPRDVVARAVAAERDATGEVRLDVSPLAFAEEFPGLAEACADRGVDWETGIPVAPCEHFLCGGVAVDTVGRTSLDRLFAVGECARTGVHGANRLASTSLLEGLVWGLRAGETAAGDDRAPAPSEPPELRDRDPDLPDGFAAEKFRRLRRVMDEHVGLRRTGADLQRAQGVLRRLKGEVDSYARTRTSRDLYQLRNAAVVGLLIARAAGENPESAGCHHRSDEAAAEEAPDAGH.

Residues 14–17 (SGIA), 45–52 (STDWAQGG), and Asp214 contribute to the FAD site. The active-site Proton donor/acceptor is the Arg279. FAD-binding positions include Glu358 and 374 to 375 (SL). Disordered regions lie at residues 389-412 (AAGDDRAPAPSEPPELRDRDPDLP) and 486-509 (NPESAGCHHRSDEAAAEEAPDAGH). A compositionally biased stretch (basic and acidic residues) spans 402–412 (PELRDRDPDLP). Residues 499-509 (AAAEEAPDAGH) are compositionally biased toward acidic residues.

Belongs to the FAD-dependent oxidoreductase 2 family. NadB subfamily. The cofactor is FAD.

Its subcellular location is the cytoplasm. It carries out the reaction L-aspartate + O2 = iminosuccinate + H2O2. Its pathway is cofactor biosynthesis; NAD(+) biosynthesis; iminoaspartate from L-aspartate (oxidase route): step 1/1. Its function is as follows. Catalyzes the oxidation of L-aspartate to iminoaspartate, the first step in the de novo biosynthesis of NAD(+). This chain is L-aspartate oxidase (nadB), found in Halobacterium salinarum (strain ATCC 700922 / JCM 11081 / NRC-1) (Halobacterium halobium).